A 363-amino-acid chain; its full sequence is tRNA/tmRNA (uracil-C(5))-methyltransferase (363 aa).

5 residues coordinate S-adenosyl-L-methionine: Gln187, Tyr215, Asn220, Glu236, and Asp296. Cys321 serves as the catalytic Nucleophile. The Proton acceptor role is filled by Glu355.

Belongs to the class I-like SAM-binding methyltransferase superfamily. RNA M5U methyltransferase family. TrmA subfamily.

It carries out the reaction uridine(54) in tRNA + S-adenosyl-L-methionine = 5-methyluridine(54) in tRNA + S-adenosyl-L-homocysteine + H(+). It catalyses the reaction uridine(341) in tmRNA + S-adenosyl-L-methionine = 5-methyluridine(341) in tmRNA + S-adenosyl-L-homocysteine + H(+). Dual-specificity methyltransferase that catalyzes the formation of 5-methyluridine at position 54 (m5U54) in all tRNAs, and that of position 341 (m5U341) in tmRNA (transfer-mRNA). This Pseudomonas fluorescens protein is tRNA/tmRNA (uracil-C(5))-methyltransferase.